A 211-amino-acid chain; its full sequence is Peptidyl-tRNA hydrolase (211 aa).

TRNA is bound at residue Y17. H22 functions as the Proton acceptor in the catalytic mechanism. TRNA-binding residues include F79, N81, and N127.

This sequence belongs to the PTH family. As to quaternary structure, monomer.

It localises to the cytoplasm. The catalysed reaction is an N-acyl-L-alpha-aminoacyl-tRNA + H2O = an N-acyl-L-amino acid + a tRNA + H(+). Hydrolyzes ribosome-free peptidyl-tRNAs (with 1 or more amino acids incorporated), which drop off the ribosome during protein synthesis, or as a result of ribosome stalling. Functionally, catalyzes the release of premature peptidyl moieties from peptidyl-tRNA molecules trapped in stalled 50S ribosomal subunits, and thus maintains levels of free tRNAs and 50S ribosomes. The chain is Peptidyl-tRNA hydrolase from Solidesulfovibrio magneticus (strain ATCC 700980 / DSM 13731 / RS-1) (Desulfovibrio magneticus).